The sequence spans 507 residues: MSTTAYPDTILIIDFGSQVTQLIARRVREANVYCEIVPFQSADEAFKRLQPKGVILSGSPHSTTDIGSPRAPQAIFDAGIPVLGICYGEQTMCAQLGGNVESGHDREFGRAFLDVQEDSPLFAGIWAKGTRHQVWMSHGDRVTSLPDGFTIIGTSPNAPYAVIADEKRKYYGVQFHPEVVHTPDGAKLLQNFVHRIVGVKPGWTMGAYREQAVEAIRKQVGSGKVICALSGGVDSSVAALLAHEAVGDQLTCILVDHGLMRKDEVQQVVEMFREHYNLPLILVDASDRFIGALEGESDPEKKRKTIGRLFIEVFEEEARKLGGADFLVQGTLYPDVIESVSFTGGPSVTIKSHHNVGGLPERMKMQLVEPLRELFKDEVRLLGKELGLPDSFIGRHPFPGPGLAIRCPGGVTREKLEILREADAIYLDEIRKAGLYDAIWQAFAVLLPVQDRGRDGGWPHLRIRLRLARGDFGGRHDGGFLPLRHEFPRQCGHPHHQRSPRHQPRCL.

Positions 9 to 202 constitute a Glutamine amidotransferase type-1 domain; the sequence is TILIIDFGSQ…VHRIVGVKPG (194 aa). Residue Cys-86 is the Nucleophile of the active site. Catalysis depends on residues His-176 and Glu-178. Residues 203–395 enclose the GMPS ATP-PPase domain; the sequence is WTMGAYREQA…LGLPDSFIGR (193 aa). 230-236 lines the ATP pocket; that stretch reads SGGVDSS.

In terms of assembly, homodimer.

The enzyme catalyses XMP + L-glutamine + ATP + H2O = GMP + L-glutamate + AMP + diphosphate + 2 H(+). The protein operates within purine metabolism; GMP biosynthesis; GMP from XMP (L-Gln route): step 1/1. In terms of biological role, catalyzes the synthesis of GMP from XMP. In Brucella melitensis biotype 1 (strain ATCC 23456 / CCUG 17765 / NCTC 10094 / 16M), this protein is GMP synthase [glutamine-hydrolyzing].